We begin with the raw amino-acid sequence, 157 residues long: Small ribosomal subunit protein uS7 (157 aa).

Belongs to the universal ribosomal protein uS7 family. Part of the 30S ribosomal subunit. Contacts proteins S9 and S11.

Its function is as follows. One of the primary rRNA binding proteins, it binds directly to 16S rRNA where it nucleates assembly of the head domain of the 30S subunit. Is located at the subunit interface close to the decoding center, probably blocks exit of the E-site tRNA. The sequence is that of Small ribosomal subunit protein uS7 from Hydrogenovibrio crunogenus (strain DSM 25203 / XCL-2) (Thiomicrospira crunogena).